Reading from the N-terminus, the 303-residue chain is 1-phosphofructokinase (303 aa).

Residue 248–249 (GD) coordinates ATP. Asp249 acts as the Proton acceptor in catalysis.

This sequence belongs to the carbohydrate kinase PfkB family.

The catalysed reaction is beta-D-fructose 1-phosphate + ATP = beta-D-fructose 1,6-bisphosphate + ADP + H(+). In terms of biological role, catalyzes the ATP-dependent phosphorylation of fructose-l-phosphate to fructose-l,6-bisphosphate. This chain is 1-phosphofructokinase (fruK), found in Bacillus subtilis (strain 168).